We begin with the raw amino-acid sequence, 323 residues long: tRNA uridine(34) hydroxylase (323 aa).

Positions 127–221 (QDENTVVLDA…YGQDPEVQGD (95 aa)) constitute a Rhodanese domain. Cys181 serves as the catalytic Cysteine persulfide intermediate.

This sequence belongs to the TrhO family.

The catalysed reaction is uridine(34) in tRNA + AH2 + O2 = 5-hydroxyuridine(34) in tRNA + A + H2O. Catalyzes oxygen-dependent 5-hydroxyuridine (ho5U) modification at position 34 in tRNAs. This is tRNA uridine(34) hydroxylase from Oceanobacillus iheyensis (strain DSM 14371 / CIP 107618 / JCM 11309 / KCTC 3954 / HTE831).